The chain runs to 729 residues: Alpha-galactosidase AgaA (729 aa).

Substrate is bound by residues D53, W199, D366–D367, R443, K476–N480, C526, and D548. Residue D478 is the Nucleophile of the active site. The active-site Proton donor is the D548.

Belongs to the glycosyl hydrolase 36 family. In terms of assembly, homotetramer.

It catalyses the reaction Hydrolysis of terminal, non-reducing alpha-D-galactose residues in alpha-D-galactosides, including galactose oligosaccharides, galactomannans and galactolipids.. With respect to regulation, not inhibited by D-galactose or sucrose. Inhibited by pharmaceutical drug 1-deoxygalactonojirimycin. In terms of biological role, hydrolyzes the short-chain alpha-galactosaccharides raffinose and stachyose. The chain is Alpha-galactosidase AgaA from Geobacillus stearothermophilus (Bacillus stearothermophilus).